The following is a 269-amino-acid chain: Regulatory protein RecX (269 aa).

This sequence belongs to the RecX family.

The protein resides in the cytoplasm. In terms of biological role, modulates RecA activity. This is Regulatory protein RecX from Listeria monocytogenes serotype 4b (strain CLIP80459).